The sequence spans 409 residues: MADAPTYIRQSTTGTATTAPTTMPVHPDTTYYKTTTTTVSDAPRAIADVNDDNHDNYDETTGLRSGEKKTRPLVTSTTAPIDAGRMTLGQKISRWTRIGSDLAREALAEFLGSFILIVFGNGVVAQVVLSRGAHGNFLSINIGYGLAVAFGVYIAGGISGGHLNPAVSLAFAALGKLPWRKLPVYMFAQYAGCICASAIVHAIYYDALNNYDGGNRTRGDTWQSTAGIHASYPQEFLYWQTGLADQIFATSFLMIGILALTDNRNTGPPGGVVPILVGCLVMAIGLAYGFNCGYPINPARDMGPRLFTLMAGWGSRTFSNYNPYIFNDYYQRIPYWFWIPVVGPHLGALLGAAIYFFFIGNHWPTLHRNVLELQVGHRDNSDDIELLAAKSRRPIEVVTTTETTRERRT.

Disordered stretches follow at residues 1–24 and 47–74; these read MADA…TTMP and ADVN…RPLV. A compositionally biased stretch (low complexity) spans 12 to 22; the sequence is TTGTATTAPTT. 2 helical membrane passes run 110–130 and 138–158; these read FLGS…VVLS and LSIN…AGGI. The short motif at 164 to 166 is the NPA 1 element; that stretch reads NPA. Residues 184-204 form a helical membrane-spanning segment; it reads VYMFAQYAGCICASAIVHAIY. Asn-215 carries N-linked (GlcNAc...) asparagine glycosylation. 2 consecutive transmembrane segments (helical) span residues 241-261 and 270-290; these read TGLA…LALT and GGVV…AYGF. An NPA 2 motif is present at residues 297-299; sequence NPA. Residues 339 to 359 traverse the membrane as a helical segment; sequence IPVVGPHLGALLGAAIYFFFI.

This sequence belongs to the MIP/aquaporin (TC 1.A.8) family.

It is found in the cell membrane. Aquaglyceroporin that may modulate the water content and osmolytes during anhydrobiosis. This chain is Aquaporin-10, found in Milnesium tardigradum (Water bear).